Consider the following 505-residue polypeptide: Forkhead box protein O4 (505 aa).

Residues 1 to 10 (MDPGNENSAT) are compositionally biased toward polar residues. Disordered regions lie at residues 1-100 (MDPG…RRNA) and 176-246 (SWWM…CSRN). Position 32 is a phosphothreonine; by PKB/AKT1 (T32). Residues 54-64 (LGEKVHTEGRS) are compositionally biased toward basic and acidic residues. The segment at residues 100-188 (AWGNQSYAEL…MLNPEGGKSG (89 aa)) is a DNA-binding region (fork-head). Position 197 is a phosphoserine; by PKB/AKT1 (S197). Residues 205–216 (LRGRSKAPKKKP) are compositionally biased toward basic residues. A Phosphoserine; by PKB/AKT1 modification is found at S262.

In terms of assembly, interacts with CREBBP/CBP, CTNNB1, MYOCD, SIRT1, SRF and YWHAZ. Acetylated by CREBBP/CBP and deacetylated by SIRT1. Binding of YWHAZ inhibits DNA-binding. Interacts with USP7; the interaction is enhanced in presence of hydrogen peroxide and occurs independently of TP53. Interacts with NLK, and this inhibits monoubiquitination and transcriptional activity. Interacts with FOXK1; the interaction inhibits MEF2C transactivation activity. Acetylation by CREBBP/CBP, which is induced by peroxidase stress, inhibits transcriptional activity. Deacetylation by SIRT1 is NAD-dependent and stimulates transcriptional activity. Post-translationally, phosphorylation by PKB/AKT1 inhibits transcriptional activity and is responsible for cytoplasmic localization. May be phosphorylated at multiple sites by NLK. In terms of processing, monoubiquitinated; monoubiquitination is induced by oxidative stress and reduced by deacetylase inhibitors; results in its relocalization to the nucleus and its increased transcriptional activity. Deubiquitinated by USP7; deubiquitination is induced by oxidative stress; enhances its interaction with USP7 and consequently, deubiquitination; increases its translocation to the cytoplasm and inhibits its transcriptional activity. Hydrogene-peroxide-induced ubiquitination and USP7-mediated deubiquitination have no major effect on its protein stability. In terms of tissue distribution, heart, brain, placenta, lung, liver, skeletal muscle, kidney and pancreas. Isoform zeta is most abundant in the liver, kidney, and pancreas.

The protein resides in the cytoplasm. It localises to the nucleus. Functionally, transcription factor involved in the regulation of the insulin signaling pathway. Binds to insulin-response elements (IREs) and can activate transcription of IGFBP1. Down-regulates expression of HIF1A and suppresses hypoxia-induced transcriptional activation of HIF1A-modulated genes. Also involved in negative regulation of the cell cycle. Involved in increased proteasome activity in embryonic stem cells (ESCs) by activating expression of PSMD11 in ESCs, leading to enhanced assembly of the 26S proteasome, followed by higher proteasome activity. This is Forkhead box protein O4 (FOXO4) from Homo sapiens (Human).